Reading from the N-terminus, the 274-residue chain is Large ribosomal subunit protein uL2 (274 aa).

2 disordered regions span residues 28-55 and 224-274; these read APHA…RHVG and VAMN…RRRK.

This sequence belongs to the universal ribosomal protein uL2 family. In terms of assembly, part of the 50S ribosomal subunit. Forms a bridge to the 30S subunit in the 70S ribosome.

In terms of biological role, one of the primary rRNA binding proteins. Required for association of the 30S and 50S subunits to form the 70S ribosome, for tRNA binding and peptide bond formation. It has been suggested to have peptidyltransferase activity; this is somewhat controversial. Makes several contacts with the 16S rRNA in the 70S ribosome. This is Large ribosomal subunit protein uL2 from Pseudomonas putida (strain W619).